Here is a 214-residue protein sequence, read N- to C-terminus: Small ribosomal subunit protein uS5 (214 aa).

Positions 54 to 117 constitute an S5 DRBM domain; that stretch reads LKYEVVDIKV…RDAKMNILPV (64 aa).

This sequence belongs to the universal ribosomal protein uS5 family. Part of the 30S ribosomal subunit. Contacts protein S4.

Functionally, with S4 and S12 plays an important role in translational accuracy. The protein is Small ribosomal subunit protein uS5 of Saccharolobus islandicus (strain Y.N.15.51 / Yellowstone #2) (Sulfolobus islandicus).